The chain runs to 859 residues: Mismatch repair endonuclease PMS2 (859 aa).

ATP contacts are provided by Asn45, Asp70, Glu109, Ala110, and Leu111. Disordered stretches follow at residues 391-413 (ELEK…ADEK), 427-455 (LHPT…RGVL), and 469-555 (RGSQ…KPED). Basic and acidic residues-rich tracts occupy residues 427–439 (LHPT…RGPE) and 485–495 (CMDREKIEKDS). Positions 512 to 525 (EVASSFSSDYNVSS) are enriched in polar residues. The Nuclear localization signal motif lies at 574 to 577 (KRFK). A disordered region spans residues 578 to 597 (TEERPSNVNISQRLPGPQST). The segment covering 583 to 597 (SNVNISQRLPGPQST) has biased composition (polar residues).

The protein belongs to the DNA mismatch repair MutL/HexB family. As to quaternary structure, heterodimer of PMS2 and MLH1 (MutL alpha); this interaction is required for the stability of both partners. Forms a ternary complex with MutS alpha (MSH2-MSH6) or MutS beta (MSH2-MSH3). Part of the BRCA1-associated genome surveillance complex (BASC), which contains BRCA1, MSH2, MSH6, MLH1, ATM, BLM, PMS2 and the RAD50-MRE11-NBS1 protein complex. This association could be a dynamic process changing throughout the cell cycle and within subnuclear domains. Interacts with MTMR15/FAN1.

It localises to the nucleus. It carries out the reaction ATP + H2O = ADP + phosphate + H(+). Component of the post-replicative DNA mismatch repair system (MMR). Heterodimerizes with MLH1 to form MutL alpha. DNA repair is initiated by MutS alpha (MSH2-MSH6) or MutS beta (MSH2-MSH3) binding to a dsDNA mismatch, then MutL alpha is recruited to the heteroduplex. Assembly of the MutL-MutS-heteroduplex ternary complex in presence of RFC and PCNA is sufficient to activate endonuclease activity of PMS2. It introduces single-strand breaks near the mismatch and thus generates new entry points for the exonuclease EXO1 to degrade the strand containing the mismatch. DNA methylation would prevent cleavage and therefore assure that only the newly mutated DNA strand is going to be corrected. MutL alpha (MLH1-PMS2) interacts physically with the clamp loader subunits of DNA polymerase III, suggesting that it may play a role to recruit the DNA polymerase III to the site of the MMR. Also implicated in DNA damage signaling, a process which induces cell cycle arrest and can lead to apoptosis in case of major DNA damages. Possesses an ATPase activity, but in the absence of gross structural changes, ATP hydrolysis may not be necessary for proficient mismatch repair. In Mus musculus (Mouse), this protein is Mismatch repair endonuclease PMS2.